Reading from the N-terminus, the 230-residue chain is Cytochrome b6-f complex iron-sulfur subunit, chloroplastic (230 aa).

Residues 1 to 50 (MSSTTLSPTTPSQLCSGKSGISCPSIALLVKPTRTQMTGRGNKGMKITCQ) constitute a chloroplast transit peptide. The helical transmembrane segment at 72-92 (LLGALSLPTAGMLVPYGSFLV) threads the bilayer. Residues 115–213 (ATEWLKTHAP…VGVEDGKVVF (99 aa)) form the Rieske domain. Residues cysteine 157, histidine 159, cysteine 175, and histidine 178 each coordinate [2Fe-2S] cluster. Cysteine 162 and cysteine 177 are disulfide-bonded.

This sequence belongs to the Rieske iron-sulfur protein family. In terms of assembly, the 4 large subunits of the cytochrome b6-f complex are cytochrome b6, subunit IV (17 kDa polypeptide, petD), cytochrome f and the Rieske protein, while the 4 small subunits are petG, petL, petM and petN. The complex functions as a dimer. It depends on [2Fe-2S] cluster as a cofactor.

Its subcellular location is the plastid. It localises to the chloroplast thylakoid membrane. It catalyses the reaction 2 oxidized [plastocyanin] + a plastoquinol + 2 H(+)(in) = 2 reduced [plastocyanin] + a plastoquinone + 4 H(+)(out). Component of the cytochrome b6-f complex, which mediates electron transfer between photosystem II (PSII) and photosystem I (PSI), cyclic electron flow around PSI, and state transitions. This Pisum sativum (Garden pea) protein is Cytochrome b6-f complex iron-sulfur subunit, chloroplastic (petC).